A 364-amino-acid chain; its full sequence is Probable UDP-arabinopyranose mutase 1 (364 aa).

Residues 110–112 (DDD) carry the DXD motif motif. Arginine 158 is a glycosylation site (N-linked (Glc...) arginine).

Belongs to the RGP family. In terms of assembly, homopentamer or homohexamer. Mn(2+) serves as cofactor. It depends on Mg(2+) as a cofactor. In terms of processing, reversibly glycosylated by UDP-glucose, UDP-xylose and UDP-galactose.

Its subcellular location is the secreted. The protein resides in the cell wall. It localises to the cell junction. It is found in the plasmodesma. The protein localises to the golgi apparatus. It carries out the reaction UDP-beta-L-arabinofuranose = UDP-beta-L-arabinopyranose. Probable UDP-L-arabinose mutase involved in the biosynthesis of cell wall non-cellulosic polysaccharides. Was initially shown to possess an autoglycosylating activity which is dependent on the presence of UDP-glucose and manganese. This is Probable UDP-arabinopyranose mutase 1 from Zea mays (Maize).